A 952-amino-acid chain; its full sequence is Bifunctional ent-kaurene synthase (952 aa).

The short motif at 328–331 (DVDD) is the DXDD B-type cyclization motif element. Positions 668, 672, 848, 849, 852, and 856 each coordinate Mg(2+). Positions 668 to 672 (DEYME) match the DEXXE A-type cyclization motif motif.

This sequence belongs to the terpene synthase family. It depends on Mg(2+) as a cofactor.

It catalyses the reaction ent-copalyl diphosphate = ent-kaur-16-ene + diphosphate. The enzyme catalyses (2E,6E,10E)-geranylgeranyl diphosphate = ent-copalyl diphosphate. It participates in plant hormone biosynthesis; gibberellin biosynthesis. Bifunctional ent-kaurene synthase; part of the gene cluster that mediates the biosynthesis of gibberellins (GAs), diterpenoids that may provide a selective advantage during infection of the preferred host plant, rice. Gibberellins (GAs) are diterpenoids and are synthesized via the mevalonate pathway. Biosynthesis of the major metabolite GA3 (gibberellic acid) from geranylgeranyl diphosphate (GGPP) requires 13 steps. The GGPP produced by the geranylgeranyl diphosphate synthase GGS2 is converted to ent-kaurene via ent-copalyldiphosphate in a two-step cyclization reaction performed by the bifunctional ent-copalyl diphosphate synthase/ent-kaurene synthase enzyme (CPS/KS). Ent-Kaurene is metabolized to GAs by a series of oxidation reactions catalyzed by cytochrome P450 monooxygenases. Cytochrome P450 monooxygenase P450-4 is an ent-kaurene oxidase that catalyzes the three oxidation steps between ent-kaurene and ent-kaurenoic acid. The highly multifunctional cytochrome P450 monooxygenase P450-1 then catalyzes four steps involving oxidation at two carbon atoms, in the main pathway from ent-kaurenoic acid to GA14 via GA12-aldehyde as well as producing kaurenolides and fujenoic acids as by-products. The cytochrome P450 monooxygenase P450-2 then converts GA14 to GA4 by removal of C-20. GA4 is further converted to GA7 by the GA4 desaturase DES via 1,2-desaturation before cytochrome P450 monooxygenase P450-3, a 13-hydroxylase, hydroxylates GA7 to GA3, the final product of the GA-biosynthetic pathway. In Gibberella fujikuroi (strain CBS 195.34 / IMI 58289 / NRRL A-6831) (Bakanae and foot rot disease fungus), this protein is Bifunctional ent-kaurene synthase.